Here is a 232-residue protein sequence, read N- to C-terminus: Triosephosphate isomerase (232 aa).

6 to 8 (NLK) contributes to the substrate binding site. His91 serves as the catalytic Electrophile. Glu158 functions as the Proton acceptor in the catalytic mechanism. 2 residues coordinate substrate: Gly164 and Ser194.

It belongs to the triosephosphate isomerase family. In terms of assembly, homodimer.

It is found in the cytoplasm. It carries out the reaction D-glyceraldehyde 3-phosphate = dihydroxyacetone phosphate. It functions in the pathway carbohydrate biosynthesis; gluconeogenesis. The protein operates within carbohydrate degradation; glycolysis; D-glyceraldehyde 3-phosphate from glycerone phosphate: step 1/1. Its function is as follows. Involved in the gluconeogenesis. Catalyzes stereospecifically the conversion of dihydroxyacetone phosphate (DHAP) to D-glyceraldehyde-3-phosphate (G3P). The protein is Triosephosphate isomerase of Campylobacter hominis (strain ATCC BAA-381 / DSM 21671 / CCUG 45161 / LMG 19568 / NCTC 13146 / CH001A).